The primary structure comprises 558 residues: Putative polypeptide N-acetylgalactosaminyltransferase 13 (558 aa).

The Cytoplasmic segment spans residues 1 to 12 (MHAGGKYCGPRH). Residues 13–32 (CSFYIIAFLICQLFFLVIFI) form a helical; Signal-anchor for type II membrane protein membrane-spanning segment. Over 33 to 558 (RNDDASSANE…QFALEMEGQT (526 aa)) the chain is Lumenal. 2 N-linked (GlcNAc...) asparagine glycosylation sites follow: N48 and N111. 4 cysteine pairs are disulfide-bonded: C97/C335, C326/C412, C445/C460, and C484/C498. A catalytic subdomain A region spans residues 109 to 225 (EANVSVVISF…EGWLEPLLER (117 aa)). The substrate site is built by D150 and R186. D209 serves as a coordination point for Mn(2+). S210 is a substrate binding site. Mn(2+) is bound at residue H211. Residues 281–343 (PYQSPAFAGG…PCSRIGHIFR (63 aa)) form a catalytic subdomain B region. W312 is a binding site for substrate. Residue H340 participates in Mn(2+) binding. Substrate is bound by residues R343 and H346. The Ricin B-type lectin domain maps to 422-556 (VSPELRMHFD…SFQFALEMEG (135 aa)). The N-linked (GlcNAc...) asparagine glycan is linked to N501. C525 and C539 are oxidised to a cystine.

This sequence belongs to the glycosyltransferase 2 family. GalNAc-T subfamily. Mn(2+) is required as a cofactor. During embryonic stages 16-17, very weak expression in the midgut.

It localises to the golgi apparatus membrane. It catalyses the reaction L-seryl-[protein] + UDP-N-acetyl-alpha-D-galactosamine = a 3-O-[N-acetyl-alpha-D-galactosaminyl]-L-seryl-[protein] + UDP + H(+). It carries out the reaction L-threonyl-[protein] + UDP-N-acetyl-alpha-D-galactosamine = a 3-O-[N-acetyl-alpha-D-galactosaminyl]-L-threonyl-[protein] + UDP + H(+). It participates in protein modification; protein glycosylation. Its function is as follows. May catalyze the initial reaction in O-linked oligosaccharide biosynthesis, the transfer of an N-acetyl-D-galactosamine residue to a serine or threonine residue on the protein receptor. This Drosophila melanogaster (Fruit fly) protein is Putative polypeptide N-acetylgalactosaminyltransferase 13 (pgant13).